Here is a 111-residue protein sequence, read N- to C-terminus: U-scoloptoxin(16)-Sm2a (111 aa).

The first 28 residues, 1-28 (MCAKPNHLFVTVTFIFGFAVCIVQISAW), serve as a signal peptide directing secretion.

This sequence belongs to the scoloptoxin-16 family. Contains 4 disulfide bonds. As to expression, expressed by the venom gland.

Its subcellular location is the secreted. This chain is U-scoloptoxin(16)-Sm2a, found in Scolopendra morsitans (Tanzanian blue ringleg centipede).